Here is a 77-residue protein sequence, read N- to C-terminus: MPKCPKCDKEVYFAERVTSLGKDWHRPCLKCEKCGKTLTSGGHAEHEGKPYCNHPCYSAMFGPKGFGRGGAESHTFK.

The region spanning 2–63 (PKCPKCDKEV…HPCYSAMFGP (62 aa)) is the LIM zinc-binding domain. Residues Lys9 and Lys22 each carry the N6-acetyllysine modification. Arg68 carries the omega-N-methylarginine modification.

In terms of biological role, seems to have a role in zinc absorption and may function as an intracellular zinc transport protein. The sequence is that of Cysteine-rich protein 1 (Crip1) from Mus musculus (Mouse).